The chain runs to 473 residues: ATP-dependent 6-phosphofructokinase 1 (473 aa).

Ser71 carries the phosphoserine modification. ATP contacts are provided by residues Gly102, 165–166, and 190–193; these read RG and GDGS. Residue Asp191 participates in Mg(2+) binding. Residues 219–221, 264–266, Glu320, and 376–379 contribute to the substrate site; these read TID, MGR, and YMIR. The active-site Proton acceptor is the Asp221.

This sequence belongs to the phosphofructokinase type A (PFKA) family. PPi-dependent PFK group II subfamily. Atypical ATP-dependent clade 'X' sub-subfamily. In terms of assembly, homotetramer. Mg(2+) serves as cofactor. In terms of tissue distribution, expressed in roots, leaves, stems and flowers.

Its subcellular location is the cytoplasm. The catalysed reaction is beta-D-fructose 6-phosphate + ATP = beta-D-fructose 1,6-bisphosphate + ADP + H(+). Its pathway is carbohydrate degradation; glycolysis; D-glyceraldehyde 3-phosphate and glycerone phosphate from D-glucose: step 3/4. Allosterically activated by AMP. Its function is as follows. Catalyzes the phosphorylation of D-fructose 6-phosphate to fructose 1,6-bisphosphate by ATP, the first committing step of glycolysis. The polypeptide is ATP-dependent 6-phosphofructokinase 1 (Arabidopsis thaliana (Mouse-ear cress)).